The following is a 530-amino-acid chain: Phosphoenolpyruvate carboxykinase (ATP) (530 aa).

The substrate site is built by Arg60, Tyr195, and Lys201. Residues Lys201, His221, and 237–245 (GLSGTGKTT) contribute to the ATP site. Mn(2+)-binding residues include Lys201 and His221. Asp258 contributes to the Mn(2+) binding site. Residues Glu286, Arg324, and Ser449 each coordinate ATP. Residue Arg324 coordinates substrate.

This sequence belongs to the phosphoenolpyruvate carboxykinase (ATP) family. Requires Mn(2+) as cofactor.

It is found in the cytoplasm. It carries out the reaction oxaloacetate + ATP = phosphoenolpyruvate + ADP + CO2. It functions in the pathway carbohydrate biosynthesis; gluconeogenesis. Functionally, involved in the gluconeogenesis. Catalyzes the conversion of oxaloacetate (OAA) to phosphoenolpyruvate (PEP) through direct phosphoryl transfer between the nucleoside triphosphate and OAA. The protein is Phosphoenolpyruvate carboxykinase (ATP) of Geotalea uraniireducens (strain Rf4) (Geobacter uraniireducens).